The following is a 565-amino-acid chain: NAD-dependent malic enzyme (565 aa).

The active-site Proton donor is the Tyr104. Residue Arg157 participates in NAD(+) binding. Catalysis depends on Lys175, which acts as the Proton acceptor. 3 residues coordinate a divalent metal cation: Glu246, Asp247, and Asp270. Residues Asp270 and Asn418 each contribute to the NAD(+) site.

It belongs to the malic enzymes family. Homotetramer. The cofactor is Mg(2+). It depends on Mn(2+) as a cofactor.

It catalyses the reaction (S)-malate + NAD(+) = pyruvate + CO2 + NADH. The catalysed reaction is oxaloacetate + H(+) = pyruvate + CO2. The protein is NAD-dependent malic enzyme of Pectobacterium atrosepticum (strain SCRI 1043 / ATCC BAA-672) (Erwinia carotovora subsp. atroseptica).